The sequence spans 225 residues: Ribonuclease 3 (225 aa).

One can recognise an RNase III domain in the interval 5 to 127 (IEKLTRQLGY…IIGAVYLDSD (123 aa)). Glutamate 40 provides a ligand contact to Mg(2+). Aspartate 44 is an active-site residue. The Mg(2+) site is built by aspartate 113 and glutamate 116. Glutamate 116 is a catalytic residue. The 71-residue stretch at 154–224 (DPKTRLQEFL…AELALEQLTN (71 aa)) folds into the DRBM domain.

The protein belongs to the ribonuclease III family. As to quaternary structure, homodimer. Mg(2+) serves as cofactor.

It localises to the cytoplasm. The enzyme catalyses Endonucleolytic cleavage to 5'-phosphomonoester.. Functionally, digests double-stranded RNA. Involved in the processing of primary rRNA transcript to yield the immediate precursors to the large and small rRNAs (23S and 16S). Processes some mRNAs, and tRNAs when they are encoded in the rRNA operon. Processes pre-crRNA and tracrRNA of type II CRISPR loci if present in the organism. This Vibrio vulnificus (strain YJ016) protein is Ribonuclease 3.